Reading from the N-terminus, the 110-residue chain is Large ribosomal subunit protein uL22 (110 aa).

Belongs to the universal ribosomal protein uL22 family. As to quaternary structure, part of the 50S ribosomal subunit.

Functionally, this protein binds specifically to 23S rRNA; its binding is stimulated by other ribosomal proteins, e.g. L4, L17, and L20. It is important during the early stages of 50S assembly. It makes multiple contacts with different domains of the 23S rRNA in the assembled 50S subunit and ribosome. In terms of biological role, the globular domain of the protein is located near the polypeptide exit tunnel on the outside of the subunit, while an extended beta-hairpin is found that lines the wall of the exit tunnel in the center of the 70S ribosome. The sequence is that of Large ribosomal subunit protein uL22 from Vibrio parahaemolyticus serotype O3:K6 (strain RIMD 2210633).